The chain runs to 168 residues: Phosphopantetheine adenylyltransferase (168 aa).

Thr11 lines the substrate pocket. ATP is bound by residues 11-12 (TF) and His19. The substrate site is built by Lys43, Thr75, and Arg89. ATP-binding positions include 90-92 (GIR), Glu100, and 125-131 (WSYMSSS).

It belongs to the bacterial CoaD family. In terms of assembly, homohexamer. Mg(2+) serves as cofactor.

It is found in the cytoplasm. The catalysed reaction is (R)-4'-phosphopantetheine + ATP + H(+) = 3'-dephospho-CoA + diphosphate. It participates in cofactor biosynthesis; coenzyme A biosynthesis; CoA from (R)-pantothenate: step 4/5. Functionally, reversibly transfers an adenylyl group from ATP to 4'-phosphopantetheine, yielding dephospho-CoA (dPCoA) and pyrophosphate. The sequence is that of Phosphopantetheine adenylyltransferase from Wigglesworthia glossinidia brevipalpis.